The chain runs to 570 residues: Nucleoprotein (570 aa).

Residues 54 to 236 (LRKTKRTDDD…ITKEESSINI (183 aa)) form a binding site for the cap structure m7GTP region. Positions 332–356 (DLTKKPDAVPEPGAAPRPAERKGQN) are disordered. Mg(2+)-binding residues include Asp386 and Glu388. Positions 386 and 388 each coordinate Mn(2+). 4 residues coordinate Zn(2+): Glu396, Cys503, His506, and Cys531. Residue Asp535 coordinates Mg(2+). Asp535 provides a ligand contact to Mn(2+).

The protein belongs to the arenaviridae nucleocapsid protein family. In terms of assembly, homomultimerizes to form the nucleocapsid. Binds to viral genomic RNA. Interacts with glycoprotein G2. Interacts with protein Z; this interaction probably directs the encapsidated genome to budding sites. Interacts with protein L; this interaction does not interfere with Z-L interaction. Interacts with host IKBKE (via Protein kinase domain); the interaction inhibits IKBKE kinase activity.

The protein localises to the virion. Its subcellular location is the host cytoplasm. Functionally, encapsidates the genome, protecting it from nucleases. The encapsidated genomic RNA is termed the nucleocapsid (NC). Serves as template for viral transcription and replication. The increased presence of protein N in host cell does not seem to trigger the switch from transcription to replication as observed in other negative strain RNA viruses. Through the interaction with host IKBKE, strongly inhibits the phosphorylation and nuclear translocation of host IRF3, a protein involved in interferon activation pathway, leading to the inhibition of interferon-beta and IRF3-dependent promoters activation. Also encodes a functional 3'-5' exoribonuclease that degrades preferentially dsRNA substrates and thereby participates in the suppression of interferon induction. The chain is Nucleoprotein from Artibeus (neotropical fruit bats).